Consider the following 144-residue polypeptide: L-fucose mutarotase (144 aa).

His22 serves as the catalytic Proton donor. Substrate contacts are provided by residues Asp30, Arg109, and 131–133 (YGN).

It belongs to the RbsD / FucU family. FucU mutarotase subfamily. Homodecamer.

The protein resides in the cytoplasm. The catalysed reaction is alpha-L-fucose = beta-L-fucose. The protein operates within carbohydrate metabolism; L-fucose metabolism. Functionally, involved in the anomeric conversion of L-fucose. This chain is L-fucose mutarotase, found in Histophilus somni (strain 2336) (Haemophilus somnus).